A 92-amino-acid chain; its full sequence is Putative regulatory protein Tpet_0986 (92 aa).

Belongs to the RemA family.

The sequence is that of Putative regulatory protein Tpet_0986 from Thermotoga petrophila (strain ATCC BAA-488 / DSM 13995 / JCM 10881 / RKU-1).